The following is a 339-amino-acid chain: Probable G-protein coupled receptor 33 (339 aa).

Residues 1–30 (MDRVNSSGHVISVSPSLTNSTGVPTPAPKA) are Extracellular-facing. 2 N-linked (GlcNAc...) asparagine glycosylation sites follow: N5 and N19. A helical membrane pass occupies residues 31–53 (IIAAALFMSFIVGTISNGLYLWM). The Cytoplasmic portion of the chain corresponds to 54-64 (LKFKMQRTVNT). Residues 65 to 86 (LLFFHLILSYFISTLILPFMAT) traverse the membrane as a helical segment. At 87-103 (SFLQDNHWAFGSVLCKV) the chain is on the extracellular side. A disulfide bridge connects residues C101 and C179. A helical membrane pass occupies residues 104 to 124 (FNSTLSVSMFASVFFLSAISV). At 125 to 143 (DRYHLTLHPVWSQQHRTPR) the chain is on the cytoplasmic side. The chain crosses the membrane as a helical span at residues 144–165 (WASRIALRIWILATILSIPYLV). Over 166–209 (FRETHDDHKGRIKCQNNYIVGTNWESSEHQTLGQWIHAACFGRR) the chain is Extracellular. Residues 210 to 230 (FLLGFLLPFLVIVFCYKRVAT) traverse the membrane as a helical segment. Topologically, residues 231 to 246 (KMKDKGLFKSSKPFKV) are cytoplasmic. Residues 247–268 (MLTAVVSFFVCWMPYHVHSGLV) traverse the membrane as a helical segment. Topologically, residues 269–283 (LTKSQPLPSQLTLGL) are extracellular. Residues 284–303 (AVVTISFNTVVSPILYLFTG) form a helical membrane-spanning segment. The Cytoplasmic segment spans residues 304–339 (ENFEVFKKSILALFKSTFSDSSATERTQTLNSETEI).

It belongs to the G-protein coupled receptor 1 family.

It localises to the cell membrane. Its function is as follows. Orphan receptor; could be a chemoattractant receptor. This Rattus rattus (Black rat) protein is Probable G-protein coupled receptor 33 (Gpr33).